The primary structure comprises 131 residues: Small ribosomal subunit protein uS11 (131 aa).

The protein belongs to the universal ribosomal protein uS11 family. In terms of assembly, part of the 30S ribosomal subunit. Interacts with proteins S7 and S18. Binds to IF-3.

Functionally, located on the platform of the 30S subunit, it bridges several disparate RNA helices of the 16S rRNA. Forms part of the Shine-Dalgarno cleft in the 70S ribosome. In Exiguobacterium sp. (strain ATCC BAA-1283 / AT1b), this protein is Small ribosomal subunit protein uS11.